Reading from the N-terminus, the 109-residue chain is Small ribosomal subunit protein bS16 (109 aa).

The tract at residues 87–109 (ALRETPKKSAPKAKAQERAKAAG) is disordered. Over residues 100–109 (KAQERAKAAG) the composition is skewed to basic and acidic residues.

This sequence belongs to the bacterial ribosomal protein bS16 family.

The protein is Small ribosomal subunit protein bS16 of Rhodospirillum centenum (strain ATCC 51521 / SW).